Consider the following 99-residue polypeptide: Integration host factor subunit alpha (99 aa).

The tract at residues F49–I73 is disordered.

The protein belongs to the bacterial histone-like protein family. As to quaternary structure, heterodimer of an alpha and a beta chain.

This protein is one of the two subunits of integration host factor, a specific DNA-binding protein that functions in genetic recombination as well as in transcriptional and translational control. This chain is Integration host factor subunit alpha, found in Shigella boydii serotype 18 (strain CDC 3083-94 / BS512).